The primary structure comprises 131 residues: S-adenosylmethionine decarboxylase proenzyme (131 aa).

The Schiff-base intermediate with substrate; via pyruvic acid role is filled by serine 64. Serine 64 is subject to Pyruvic acid (Ser); by autocatalysis. Histidine 69 serves as the catalytic Proton acceptor; for processing activity. Cysteine 84 (proton donor; for catalytic activity) is an active-site residue.

Belongs to the prokaryotic AdoMetDC family. Type 1 subfamily. Heterotetramer of two alpha and two beta chains arranged as a dimer of alpha/beta heterodimers. Pyruvate is required as a cofactor. Post-translationally, is synthesized initially as an inactive proenzyme. Formation of the active enzyme involves a self-maturation process in which the active site pyruvoyl group is generated from an internal serine residue via an autocatalytic post-translational modification. Two non-identical subunits are generated from the proenzyme in this reaction, and the pyruvate is formed at the N-terminus of the alpha chain, which is derived from the carboxyl end of the proenzyme. The post-translation cleavage follows an unusual pathway, termed non-hydrolytic serinolysis, in which the side chain hydroxyl group of the serine supplies its oxygen atom to form the C-terminus of the beta chain, while the remainder of the serine residue undergoes an oxidative deamination to produce ammonia and the pyruvoyl group blocking the N-terminus of the alpha chain.

The enzyme catalyses S-adenosyl-L-methionine + H(+) = S-adenosyl 3-(methylsulfanyl)propylamine + CO2. It functions in the pathway amine and polyamine biosynthesis; S-adenosylmethioninamine biosynthesis; S-adenosylmethioninamine from S-adenosyl-L-methionine: step 1/1. Its function is as follows. Catalyzes the decarboxylation of S-adenosylmethionine to S-adenosylmethioninamine (dcAdoMet), the propylamine donor required for the synthesis of the polyamines spermine and spermidine from the diamine putrescine. The sequence is that of S-adenosylmethionine decarboxylase proenzyme from Thermoplasma acidophilum (strain ATCC 25905 / DSM 1728 / JCM 9062 / NBRC 15155 / AMRC-C165).